The sequence spans 86 residues: Defensin-like protein 259 (86 aa).

A signal peptide spans 1-25 (MKNASLKLPLLIFILVITSNLGAEA). 3 disulfides stabilise this stretch: cysteine 60–cysteine 76, cysteine 66–cysteine 83, and cysteine 70–cysteine 85.

It belongs to the DEFL family.

Its subcellular location is the secreted. This is Defensin-like protein 259 from Arabidopsis thaliana (Mouse-ear cress).